A 262-amino-acid chain; its full sequence is Sulfite reductase, dissimilatory-type subunit beta (262 aa).

Cys151, Cys188, Cys189, Cys193, Cys231, Cys258, and Cys261 together coordinate [4Fe-4S] cluster. Siroheme is bound at residue Cys193.

Heterohexamer of two alpha, two beta and two gamma subunits. It depends on [4Fe-4S] cluster as a cofactor. The cofactor is siroheme.

The enzyme catalyses [DsrC protein]-trisulfide + NAD(+) + 3 H2O = [DsrC protein]-dithiol + sulfite + NADH + 3 H(+). Catalyzes the reduction of sulfite to sulfide. This is the terminal oxidation reaction in sulfate respiration, a process catalyzed by the sulfate-reducing bacteria. In Megalodesulfovibrio gigas (strain ATCC 19364 / DSM 1382 / NCIMB 9332 / VKM B-1759) (Desulfovibrio gigas), this protein is Sulfite reductase, dissimilatory-type subunit beta (dsrB).